The sequence spans 665 residues: DNA mismatch repair protein MutL (665 aa).

It belongs to the DNA mismatch repair MutL/HexB family.

Its function is as follows. This protein is involved in the repair of mismatches in DNA. It is required for dam-dependent methyl-directed DNA mismatch repair. May act as a 'molecular matchmaker', a protein that promotes the formation of a stable complex between two or more DNA-binding proteins in an ATP-dependent manner without itself being part of a final effector complex. The protein is DNA mismatch repair protein MutL of Acidobacterium capsulatum (strain ATCC 51196 / DSM 11244 / BCRC 80197 / JCM 7670 / NBRC 15755 / NCIMB 13165 / 161).